Consider the following 262-residue polypeptide: Type III pantothenate kinase (262 aa).

Residue 9–16 (DIGNTNVK) coordinates ATP. Substrate contacts are provided by residues tyrosine 103 and 110–113 (GADR). Aspartate 112 (proton acceptor) is an active-site residue. Aspartate 134 contributes to the K(+) binding site. Threonine 137 contacts ATP. Residue threonine 190 participates in substrate binding.

The protein belongs to the type III pantothenate kinase family. Homodimer. Requires NH4(+) as cofactor. It depends on K(+) as a cofactor.

The protein localises to the cytoplasm. It catalyses the reaction (R)-pantothenate + ATP = (R)-4'-phosphopantothenate + ADP + H(+). It participates in cofactor biosynthesis; coenzyme A biosynthesis; CoA from (R)-pantothenate: step 1/5. Its function is as follows. Catalyzes the phosphorylation of pantothenate (Pan), the first step in CoA biosynthesis. This Nitratidesulfovibrio vulgaris (strain ATCC 29579 / DSM 644 / CCUG 34227 / NCIMB 8303 / VKM B-1760 / Hildenborough) (Desulfovibrio vulgaris) protein is Type III pantothenate kinase.